The sequence spans 301 residues: MRVVFMGTPDFSVPVLEALVAAGHEIAAVYCQPPRPAGRGKKDRPTPVHARALDLGLEVRHPVSLKGAEAQADFAALGADVAVVVAYGLILPQAVLDAPRHGCLNIHASLLPRWRGAAPIHRAIMAGDEATGICIMQMEAGLDTGPVLLRSRTPIRAEETTGALHDRLSAMGADLIVEALARLPELTPEPQPEDGVTYAAKIDKAEARVDWTRPAVAIDRQIRGLSPFPGAWTEIAGERVKLLASRLDEGQGTPGEVLDDALTIACGTGAISLIRLQRAGKAAQDADIFLRGWPVPKGTRL.

Position 109–112 (serine 109–proline 112) interacts with (6S)-5,6,7,8-tetrahydrofolate.

The protein belongs to the Fmt family.

The catalysed reaction is L-methionyl-tRNA(fMet) + (6R)-10-formyltetrahydrofolate = N-formyl-L-methionyl-tRNA(fMet) + (6S)-5,6,7,8-tetrahydrofolate + H(+). Its function is as follows. Attaches a formyl group to the free amino group of methionyl-tRNA(fMet). The formyl group appears to play a dual role in the initiator identity of N-formylmethionyl-tRNA by promoting its recognition by IF2 and preventing the misappropriation of this tRNA by the elongation apparatus. The chain is Methionyl-tRNA formyltransferase from Ruegeria pomeroyi (strain ATCC 700808 / DSM 15171 / DSS-3) (Silicibacter pomeroyi).